We begin with the raw amino-acid sequence, 310 residues long: DnaJ-like protein MG002 (310 aa).

The region spanning 1–66 (MNLYDLLELP…KEKYDSMLKV (66 aa)) is the J domain.

The protein is DnaJ-like protein MG002 of Mycoplasma genitalium (strain ATCC 33530 / DSM 19775 / NCTC 10195 / G37) (Mycoplasmoides genitalium).